The following is a 211-amino-acid chain: Stromal cell-derived factor 2 (211 aa).

Residues 1–18 (MAVVPLLLLGGLWSAVGA) form the signal peptide. MIR domains follow at residues 21-75 (LGVV…IRGK), 83-138 (GTPI…VLCN), and 139-193 (GPYW…AMEG).

Its subcellular location is the secreted. This chain is Stromal cell-derived factor 2 (SDF2), found in Homo sapiens (Human).